We begin with the raw amino-acid sequence, 478 residues long: PRAME family member 27 (478 aa).

Residues 17 to 40 form an LRR 1 repeat; it reads RSLLRDQALAMSTLEELPTELFPP. The LRR 1; degenerate repeat unit spans residues 99–126; sequence RWKLQVLDLQDVCENFWMVWSEAMARGS. One copy of the LRR 2; degenerate repeat lies at 181-205; it reads HLCCKKLKILGMPFRNIRSILKMVN. The stretch at 206–232 is one LRR 3; degenerate repeat; that stretch reads LDCIQEVEVNCKWVLPILTQFTPYLGH. An LRR 4; degenerate repeat occupies 233 to 268; that stretch reads MRNLQKLVLSHMDVSRYVSPEQKKEIVTQFTTQFLK. LRR repeat units follow at residues 269 to 294, 295 to 326, 327 to 348, 351 to 378, and 379 to 403; these read LHCL…LSCL, KTSL…SQLK, TLDL…ILLE, AATL…ALSR, and CFEL…LLSH.

It belongs to the PRAME family.

In Homo sapiens (Human), this protein is PRAME family member 27.